Reading from the N-terminus, the 89-residue chain is Small ribosomal subunit protein uS15 (89 aa).

The protein belongs to the universal ribosomal protein uS15 family. Part of the 30S ribosomal subunit. Forms a bridge to the 50S subunit in the 70S ribosome, contacting the 23S rRNA.

One of the primary rRNA binding proteins, it binds directly to 16S rRNA where it helps nucleate assembly of the platform of the 30S subunit by binding and bridging several RNA helices of the 16S rRNA. In terms of biological role, forms an intersubunit bridge (bridge B4) with the 23S rRNA of the 50S subunit in the ribosome. This chain is Small ribosomal subunit protein uS15, found in Brevibacillus brevis (strain 47 / JCM 6285 / NBRC 100599).